The following is a 70-amino-acid chain: Protein FlmC homolog (70 aa).

The disordered stretch occupies residues 1-21; sequence MSSPHQDSLLPRFAQGEEGHE.

The sequence is that of Protein FlmC homolog from Escherichia coli.